Consider the following 192-residue polypeptide: uncharacterized protein (192 aa).

Residues 168-192 (PLWRKSEAGSRKARTSNSGGPTKRA) form a disordered region. The span at 182 to 192 (TSNSGGPTKRA) shows a compositional bias: polar residues.

The protein to A.xylinum IS1268 ORFA.

This is an uncharacterized protein from Sinorhizobium fredii (strain NBRC 101917 / NGR234).